We begin with the raw amino-acid sequence, 321 residues long: Glucokinase (321 aa).

An ATP-binding site is contributed by Gly-8–Thr-13.

Belongs to the bacterial glucokinase family.

Its subcellular location is the cytoplasm. It carries out the reaction D-glucose + ATP = D-glucose 6-phosphate + ADP + H(+). The chain is Glucokinase from Salmonella typhi.